A 175-amino-acid chain; its full sequence is Large ribosomal subunit protein uL6 (175 aa).

This sequence belongs to the universal ribosomal protein uL6 family. In terms of assembly, part of the 50S ribosomal subunit.

In terms of biological role, this protein binds to the 23S rRNA, and is important in its secondary structure. It is located near the subunit interface in the base of the L7/L12 stalk, and near the tRNA binding site of the peptidyltransferase center. In Xylella fastidiosa (strain M23), this protein is Large ribosomal subunit protein uL6.